A 240-amino-acid chain; its full sequence is MGRAYQNRKESMAKTAGQKTRLYSRYGKEIYVVAKQGGVEPDGNLSLRRLIERAKKDQVPAHVIERAIDKAKGGGGEDYDTARYEGFGPGNCMVIVDCLTDNVKRTFTEVRQAFVKNDAKLGTPGTVGHMFDQSAVFVFPGEDEDAILEILMMADVDVNDVEVEDGMISVIAPHTEFFKVKTALTDAMPDINFEVENITFVPQTMTPVSGEDVAVFDKFIAALEDCDDVQNVYHNAEIQD.

Belongs to the TACO1 family.

It localises to the cytoplasm. The chain is Probable transcriptional regulatory protein SO_3401 from Shewanella oneidensis (strain ATCC 700550 / JCM 31522 / CIP 106686 / LMG 19005 / NCIMB 14063 / MR-1).